Consider the following 556-residue polypeptide: Glutamine--tRNA ligase (556 aa).

The short motif at 39–49 (PEPNGYLHIGH) is the 'HIGH' region element. ATP is bound by residues 40-42 (EPN) and 46-52 (HIGHAKS). Residues D72 and Y217 each contribute to the L-glutamine site. Residues T236 and 267–268 (RL) each bind ATP. Residues 274-278 (LTSKR) carry the 'KMSKS' region motif.

Belongs to the class-I aminoacyl-tRNA synthetase family. Monomer.

The protein localises to the cytoplasm. It carries out the reaction tRNA(Gln) + L-glutamine + ATP = L-glutaminyl-tRNA(Gln) + AMP + diphosphate. This is Glutamine--tRNA ligase from Haemophilus ducreyi (strain 35000HP / ATCC 700724).